We begin with the raw amino-acid sequence, 230 residues long: NAD(P)H-hydrate epimerase (230 aa).

The region spanning 11 to 218 (AIDVDQELFT…ALQRKYELNL (208 aa)) is the YjeF N-terminal domain. 61-65 (NNGGD) lines the (6S)-NADPHX pocket. K(+) contacts are provided by N62 and D126. (6S)-NADPHX contacts are provided by residues 130 to 136 (GFSFKPP) and D159. S162 lines the K(+) pocket.

The protein belongs to the NnrE/AIBP family. K(+) is required as a cofactor.

The enzyme catalyses (6R)-NADHX = (6S)-NADHX. The catalysed reaction is (6R)-NADPHX = (6S)-NADPHX. In terms of biological role, catalyzes the epimerization of the S- and R-forms of NAD(P)HX, a damaged form of NAD(P)H that is a result of enzymatic or heat-dependent hydration. This is a prerequisite for the S-specific NAD(P)H-hydrate dehydratase to allow the repair of both epimers of NAD(P)HX. This Drosophila erecta (Fruit fly) protein is NAD(P)H-hydrate epimerase.